The chain runs to 617 residues: 1-deoxy-D-xylulose-5-phosphate synthase (617 aa).

Thiamine diphosphate contacts are provided by residues H76 and 117–119 (GHS). D148 lines the Mg(2+) pocket. Thiamine diphosphate is bound by residues 149–150 (GA), N177, Y285, and E366. N177 serves as a coordination point for Mg(2+).

The protein belongs to the transketolase family. DXPS subfamily. In terms of assembly, homodimer. Requires Mg(2+) as cofactor. Thiamine diphosphate serves as cofactor.

The enzyme catalyses D-glyceraldehyde 3-phosphate + pyruvate + H(+) = 1-deoxy-D-xylulose 5-phosphate + CO2. The protein operates within metabolic intermediate biosynthesis; 1-deoxy-D-xylulose 5-phosphate biosynthesis; 1-deoxy-D-xylulose 5-phosphate from D-glyceraldehyde 3-phosphate and pyruvate: step 1/1. Catalyzes the acyloin condensation reaction between C atoms 2 and 3 of pyruvate and glyceraldehyde 3-phosphate to yield 1-deoxy-D-xylulose-5-phosphate (DXP). The protein is 1-deoxy-D-xylulose-5-phosphate synthase of Histophilus somni (strain 2336) (Haemophilus somnus).